The following is a 172-amino-acid chain: Shikimate kinase (172 aa).

Residue 14-19 (GAGKST) participates in ATP binding. Serine 18 contributes to the Mg(2+) binding site. Substrate-binding residues include aspartate 36, arginine 60, and glycine 82. Arginine 120 lines the ATP pocket. Arginine 140 provides a ligand contact to substrate. ATP is bound at residue glutamine 157.

It belongs to the shikimate kinase family. In terms of assembly, monomer. Requires Mg(2+) as cofactor.

Its subcellular location is the cytoplasm. The catalysed reaction is shikimate + ATP = 3-phosphoshikimate + ADP + H(+). It functions in the pathway metabolic intermediate biosynthesis; chorismate biosynthesis; chorismate from D-erythrose 4-phosphate and phosphoenolpyruvate: step 5/7. In terms of biological role, catalyzes the specific phosphorylation of the 3-hydroxyl group of shikimic acid using ATP as a cosubstrate. In Pseudoalteromonas translucida (strain TAC 125), this protein is Shikimate kinase.